The primary structure comprises 208 residues: dITP/XTP pyrophosphatase (208 aa).

A substrate-binding site is contributed by 17–22; it reads SNNPGK. Positions 49 and 78 each coordinate Mg(2+). Catalysis depends on aspartate 78, which acts as the Proton acceptor. Substrate-binding positions include serine 79, 164-167, lysine 187, and 192-193; these read FGYD and HR.

This sequence belongs to the HAM1 NTPase family. Homodimer. It depends on Mg(2+) as a cofactor.

The catalysed reaction is XTP + H2O = XMP + diphosphate + H(+). It catalyses the reaction dITP + H2O = dIMP + diphosphate + H(+). The enzyme catalyses ITP + H2O = IMP + diphosphate + H(+). In terms of biological role, pyrophosphatase that catalyzes the hydrolysis of nucleoside triphosphates to their monophosphate derivatives, with a high preference for the non-canonical purine nucleotides XTP (xanthosine triphosphate), dITP (deoxyinosine triphosphate) and ITP. Seems to function as a house-cleaning enzyme that removes non-canonical purine nucleotides from the nucleotide pool, thus preventing their incorporation into DNA/RNA and avoiding chromosomal lesions. This is dITP/XTP pyrophosphatase from Burkholderia pseudomallei (strain K96243).